A 1035-amino-acid polypeptide reads, in one-letter code: Potassium-transporting ATPase alpha chain 1 (1035 aa).

The tract at residues M1–E41 is disordered. The Cytoplasmic segment spans residues M1 to P98. 2 positions are modified to phosphotyrosine: Y7 and Y10. Residues M26 to K40 show a composition bias toward basic residues. S27 is modified (phosphoserine). The chain crosses the membrane as a helical span at residues E99 to A119. Residues A120–Y142 are Lumenal-facing. Residues L143–F163 traverse the membrane as a helical segment. Topologically, residues K164–I299 are cytoplasmic. The chain crosses the membrane as a helical span at residues E300 to V319. Over V320–A331 the chain is Lumenal. The helical transmembrane segment at M332–A349 threads the bilayer. Residues V340, A341, V343, and E345 each coordinate K(+). Residues T350–L783 are Cytoplasmic-facing. D387 (4-aspartylphosphate intermediate) is an active-site residue. Residues D387 and T389 each coordinate Mg(2+). S463 and S601 each carry phosphoserine. Positions 728 and 732 each coordinate Mg(2+). Residues K784–I803 form a helical membrane-spanning segment. E797 contacts K(+). Residues Y804–L813 are Lumenal-facing. The chain crosses the membrane as a helical span at residues G814–A834. E822 contacts K(+). The Cytoplasmic segment spans residues Y835–R854. S840 is modified (phosphoserine). A helical transmembrane segment spans residues L855–F877. Topologically, residues T878–C929 are lumenal. The chain crosses the membrane as a helical span at residues Y930 to K949. At T950–N963 the chain is on the cytoplasmic side. S954 bears the Phosphoserine; by PKA mark. Residues R964 to Y982 traverse the membrane as a helical segment. The Lumenal segment spans residues C983–F997. The chain crosses the membrane as a helical span at residues Q998–K1018. Residues L1019 to Y1035 are Cytoplasmic-facing.

The protein belongs to the cation transport ATPase (P-type) (TC 3.A.3) family. Type IIC subfamily. In terms of assembly, the gastric H(+)/K(+) ATPase pump is composed of the catalytic alpha subunit ATP4A and the regulatory beta subunit ATP4B. Interacts (via the P-domain) with ATP4B (via N-terminus); this interaction stabilizes the lumenal-open E2 conformation state and prevents the reverse reaction of the transport cycle.

It is found in the apical cell membrane. Its subcellular location is the cell membrane. It carries out the reaction K(+)(out) + ATP + H2O + H(+)(in) = K(+)(in) + ADP + phosphate + 2 H(+)(out). Its function is as follows. The catalytic subunit of the gastric H(+)/K(+) ATPase pump which transports H(+) ions in exchange for K(+) ions across the apical membrane of parietal cells. Uses ATP as an energy source to pump H(+) ions to the gastric lumen while transporting K(+) ion from the lumen into the cell. Remarkably generates a million-fold proton gradient across the gastric parietal cell membrane, acidifying the gastric juice down to pH 1. Within a transport cycle, the transfer of a H(+) ion across the membrane is coupled to ATP hydrolysis and is associated with a transient phosphorylation that shifts the pump conformation from inward-facing (E1) to outward-facing state (E2). The release of the H(+) ion in the stomach lumen is followed by binding of K(+) ion converting the pump conformation back to the E1 state. This chain is Potassium-transporting ATPase alpha chain 1 (ATP4A), found in Oryctolagus cuniculus (Rabbit).